A 151-amino-acid chain; its full sequence is 3-hydroxyacyl-[acyl-carrier-protein] dehydratase FabZ (151 aa).

Histidine 57 is a catalytic residue.

It belongs to the thioester dehydratase family. FabZ subfamily.

Its subcellular location is the cytoplasm. It carries out the reaction a (3R)-hydroxyacyl-[ACP] = a (2E)-enoyl-[ACP] + H2O. Involved in unsaturated fatty acids biosynthesis. Catalyzes the dehydration of short chain beta-hydroxyacyl-ACPs and long chain saturated and unsaturated beta-hydroxyacyl-ACPs. This is 3-hydroxyacyl-[acyl-carrier-protein] dehydratase FabZ from Prochlorococcus marinus (strain SARG / CCMP1375 / SS120).